The primary structure comprises 84 residues: Toxin To7 (84 aa).

Positions 1-20 are cleaved as a signal peptide; sequence MSIFPIVLALLLIGLEETEA. The LCN-type CS-alpha/beta domain maps to 21 to 83; it reads LDGYPLSKIN…KMYPGSSPCY (63 aa). Cystine bridges form between Cys32/Cys82, Cys36/Cys59, Cys42/Cys64, and Cys46/Cys66.

As to expression, expressed by the venom gland.

It localises to the secreted. In terms of biological role, inhibits voltage-gated sodium channels (Nav). The sequence is that of Toxin To7 from Tityus obscurus (Amazonian scorpion).